A 210-amino-acid chain; its full sequence is Ribosomal RNA small subunit methyltransferase G (210 aa).

S-adenosyl-L-methionine contacts are provided by residues Leu-78, Ile-124 to Glu-125, and Arg-138.

It belongs to the methyltransferase superfamily. RNA methyltransferase RsmG family.

The protein resides in the cytoplasm. It carries out the reaction guanosine(527) in 16S rRNA + S-adenosyl-L-methionine = N(7)-methylguanosine(527) in 16S rRNA + S-adenosyl-L-homocysteine. Functionally, specifically methylates the N7 position of guanine in position 527 of 16S rRNA. The chain is Ribosomal RNA small subunit methyltransferase G from Bordetella bronchiseptica (strain ATCC BAA-588 / NCTC 13252 / RB50) (Alcaligenes bronchisepticus).